The following is a 200-amino-acid chain: Large ribosomal subunit protein uL4 (200 aa).

A disordered region spans residues 43–71; it reads RAQKTRAEVSGSGKKPWRQKGTGRARSGD.

It belongs to the universal ribosomal protein uL4 family. As to quaternary structure, part of the 50S ribosomal subunit.

Functionally, one of the primary rRNA binding proteins, this protein initially binds near the 5'-end of the 23S rRNA. It is important during the early stages of 50S assembly. It makes multiple contacts with different domains of the 23S rRNA in the assembled 50S subunit and ribosome. Its function is as follows. Forms part of the polypeptide exit tunnel. This is Large ribosomal subunit protein uL4 from Aggregatibacter actinomycetemcomitans (Actinobacillus actinomycetemcomitans).